A 304-amino-acid polypeptide reads, in one-letter code: MQADTIKQEIRRLLKERNAVLLAHNYMRDEVQEIADITGDSLGLSQEAAKTAADVIVFCGVHFMAESASILSPHKTVLLPRRDAGCPMADMVTVEGLLELKARHPGVPVVTYVNSSAAVKAVSDICCTSANAVKVVNSLPDREVIFVPDRNLGQFVAKQSDKAFHFWDGYCPTHERLKADVVARLKAENPDALFICHPECNPAVVALADHACSTSGMYDYCRKSPAKRFIIGTEAGILYKLRLENPDKEFILASPALVCPNMKLTSLEDILDALTTMAPVVQVPEDIRVQAKRALDRMIAIPRD.

The iminosuccinate site is built by His-24 and Ser-41. Residue Cys-86 participates in [4Fe-4S] cluster binding. Residues 112–114 and Ser-129 each bind iminosuccinate; that span reads YVN. Cys-171 is a [4Fe-4S] cluster binding site. Iminosuccinate-binding positions include 197–199 and Thr-214; that span reads HPE. Cys-259 is a binding site for [4Fe-4S] cluster.

It belongs to the quinolinate synthase family. Type 2 subfamily. [4Fe-4S] cluster is required as a cofactor.

Its subcellular location is the cytoplasm. It catalyses the reaction iminosuccinate + dihydroxyacetone phosphate = quinolinate + phosphate + 2 H2O + H(+). The protein operates within cofactor biosynthesis; NAD(+) biosynthesis; quinolinate from iminoaspartate: step 1/1. Its function is as follows. Catalyzes the condensation of iminoaspartate with dihydroxyacetone phosphate to form quinolinate. The protein is Quinolinate synthase of Geobacter metallireducens (strain ATCC 53774 / DSM 7210 / GS-15).